The primary structure comprises 711 residues: Putative membrane protein ActII-3 (711 aa).

12 consecutive transmembrane segments (helical) span residues 14-34, 175-195, 199-219, 235-255, 281-301, 313-333, 369-389, 516-536, 540-560, 573-593, 623-643, and 645-665; these read LKWL…PLAG, ADFK…VVTY, LLWL…QAIV, AMIL…LLVA, AIVA…LAAL, VGVL…LVIF, AVWV…VTLN, IIPV…RALV, LLIA…ALFF, FPLW…IFLV, AGLV…VFIA, and LGFT…SVLV. The tract at residues 685–711 is disordered; the sequence is REDPSEDPAVSGMPDSIDSEASTTASR.

This sequence belongs to the resistance-nodulation-cell division (RND) (TC 2.A.6) family. MmpL subfamily.

It is found in the cell membrane. The sequence is that of Putative membrane protein ActII-3 (actII-3) from Streptomyces coelicolor (strain ATCC BAA-471 / A3(2) / M145).